A 990-amino-acid polypeptide reads, in one-letter code: Bacteriophage adsorption protein A (990 aa).

Positions 1 to 27 are cleaved as a signal peptide; it reads MKENNLNRVIGWSGLLLTSLLSTSALA. TPR repeat units follow at residues 81–114, 612–645, and 646–679; these read IPLT…HPGD, ANAY…EPNN, and SNTQ…LPDD.

In terms of assembly, (Microbial infection) Interacts with N4 phage non-contractile sheath protein; this interaction is essential for viral adsorption to the host.

The protein resides in the cell outer membrane. (Microbial infection) Allows N4 phage attachment by binding to the viral non-contractile sheath protein. The chain is Bacteriophage adsorption protein A (nfrA) from Escherichia coli (strain K12).